The sequence spans 240 residues: Prolactin-8A6 (240 aa).

The signal sequence occupies residues 1–30 (MALLLSQPHFSGPLLLLVVSNLLLWEKAAS). 3 disulfide bridges follow: C34–C41, C101–C216, and C233–C240. An N-linked (GlcNAc...) asparagine glycan is attached at N212.

The protein belongs to the somatotropin/prolactin family. In terms of tissue distribution, expressed specifically in the spongiotrophoblast and trophoblast giant cells from the junctional zone of the chorioallantoic placenta.

It localises to the secreted. The sequence is that of Prolactin-8A6 (Prl8a6) from Mus musculus (Mouse).